Consider the following 223-residue polypeptide: AAVPSGASTGIYEALELRAVEHINKTIAPALVSKLAMQEFMILPVGASSFRIGAEVYHNLKDATNVGDEGGFAPNILENKEALELLKAGYTDQVVIGMDVAASEFYRFTASAGIQVVGDDLTVTNPKRAASEKSCNCLLLKVNQIGSVTESLQACKLAQSNGWGVMVSHRSGETEDTFIADLVVGLCTGQIKTGAPCRSERYNQILRIEEELGSKSFRNPLAK.

Position 8 (Ser8) interacts with Mg(2+). Position 12 is a phosphotyrosine (Tyr12). Lys25 is subject to N6-acetyllysine. Glu39 serves as a coordination point for substrate. Lys61 carries the post-translational modification N6-acetyllysine. Catalysis depends on Glu69, which acts as the Proton donor. Lys87 is modified (N6-acetyllysine; alternate). Position 87 is an N6-malonyllysine; alternate (Lys87). Residue Lys87 is modified to N6-succinyllysine; alternate. 2 residues coordinate Mg(2+): Asp99 and Asp119. Asp119 serves as a coordination point for substrate. N6-acetyllysine occurs at positions 133 and 141. Residue Lys141 is the Proton acceptor of the active site. Residues 168–171 (SHRS) and Lys192 each bind substrate. A required for interaction with PLG region spans residues 202–223 (YNQILRIEEELGSKSFRNPLAK). An N6-acetyllysine; alternate modification is found at Lys215. An N6-malonyllysine; alternate modification is found at Lys215. The residue at position 215 (Lys215) is an N6-succinyllysine; alternate.

This sequence belongs to the enolase family. As to quaternary structure, mammalian enolase is composed of 3 isozyme subunits, alpha, beta and gamma, which can form homodimers or heterodimers which are cell-type and development-specific. ENO1 interacts with PLG in the neuronal plasma membrane and promotes its activation. The C-terminal lysine is required for this binding. Interacts with ENO4 and PGAM2. Interacts with CMTM6. It depends on Mg(2+) as a cofactor. In terms of processing, ISGylated. Lysine 2-hydroxyisobutyrylation (Khib) by p300/EP300 activates the phosphopyruvate hydratase activity.

It is found in the cytoplasm. The protein resides in the cell membrane. The enzyme catalyses (2R)-2-phosphoglycerate = phosphoenolpyruvate + H2O. Its pathway is carbohydrate degradation; glycolysis; pyruvate from D-glyceraldehyde 3-phosphate: step 4/5. In terms of biological role, glycolytic enzyme the catalyzes the conversion of 2-phosphoglycerate to phosphoenolpyruvate. In addition to glycolysis, involved in various processes such as growth control, hypoxia tolerance and allergic responses. May also function in the intravascular and pericellular fibrinolytic system due to its ability to serve as a receptor and activator of plasminogen on the cell surface of several cell-types such as leukocytes and neurons. Stimulates immunoglobulin production. The sequence is that of Alpha-enolase from Mesocricetus auratus (Golden hamster).